The primary structure comprises 502 residues: Maturase K (502 aa).

Belongs to the intron maturase 2 family. MatK subfamily.

The protein localises to the plastid. Its subcellular location is the chloroplast. Usually encoded in the trnK tRNA gene intron. Probably assists in splicing its own and other chloroplast group II introns. The chain is Maturase K from Stanleya pinnata (Prince's plume).